The primary structure comprises 562 residues: Serine/threonine-protein kinase STN7, chloroplastic (562 aa).

The N-terminal 45 residues, Met-1–Arg-45, are a transit peptide targeting the chloroplast. The region spanning Phe-134–Phe-452 is the Protein kinase domain. ATP contacts are provided by residues Leu-140–Val-148 and Lys-167. Residue Asp-279 is the Proton acceptor of the active site. Position 526 is a phosphoserine (Ser-526). A phosphothreonine mark is found at Thr-537 and Thr-541.

The protein belongs to the protein kinase superfamily. Ser/Thr protein kinase family. Phosphorylated.

The protein localises to the plastid. Its subcellular location is the chloroplast thylakoid membrane. The catalysed reaction is L-seryl-[protein] + ATP = O-phospho-L-seryl-[protein] + ADP + H(+). It catalyses the reaction L-threonyl-[protein] + ATP = O-phospho-L-threonyl-[protein] + ADP + H(+). Functionally, serine/threonine protein kinase required for state transition by phosphorylating light-harvesting complex II outer antennae (LCHII). State transition plays a central role in response to environmental changes and allows to adjust to changing light conditions via the redistribution of light excitation energy between photosystem II (PSII) and photosystem I (PSI). Phosphorylates the minor light harvesting protein LHCB4.2/CP29 and is involved in the light-dependent phosphorylation of TSP9. Acts as a key component of the long-term response (LTR) signaling pathway. Mediates phosphorylation-dependent PTAC16 subcellular localization to regulate plastid gene expression. The protein is Serine/threonine-protein kinase STN7, chloroplastic (STN7) of Arabidopsis thaliana (Mouse-ear cress).